A 457-amino-acid polypeptide reads, in one-letter code: Multidrug resistance protein MdtK (457 aa).

Topologically, residues methionine 1–leucine 10 are cytoplasmic. The chain crosses the membrane as a helical span at residues leucine 11–valine 31. Topologically, residues aspartate 32 to serine 52 are periplasmic. A helical membrane pass occupies residues isoleucine 53 to alanine 73. Residues glutamine 74 to phenylalanine 92 lie on the Cytoplasmic side of the membrane. Residues tryptophan 93–isoleucine 113 traverse the membrane as a helical segment. Topologically, residues arginine 114 to lysine 126 are periplasmic. A helical transmembrane segment spans residues alanine 127–alanine 147. The Cytoplasmic portion of the chain corresponds to arginine 148–proline 159. The chain crosses the membrane as a helical span at residues glycine 160–tyrosine 180. The Periplasmic segment spans residues glycine 181–leucine 188. A helical transmembrane segment spans residues glycine 189 to valine 209. Over serine 210–glycine 242 the chain is Cytoplasmic. Residues leucine 243–valine 263 traverse the membrane as a helical segment. Topologically, residues serine 264 to glutamine 275 are periplasmic. Residues isoleucine 276–threonine 296 traverse the membrane as a helical segment. Residues isoleucine 297–threonine 313 lie on the Cytoplasmic side of the membrane. The helical transmembrane segment at alanine 314–valine 334 threads the bilayer. Residues serine 335–glutamate 349 are Periplasmic-facing. Residues valine 350–isoleucine 370 traverse the membrane as a helical segment. Topologically, residues glutamine 371–serine 386 are cytoplasmic. Residues isoleucine 387–alanine 407 form a helical membrane-spanning segment. Over leucine 408–glycine 417 the chain is Periplasmic. The helical transmembrane segment at proline 418 to leucine 438 threads the bilayer. Over arginine 439 to arginine 457 the chain is Cytoplasmic.

It belongs to the multi antimicrobial extrusion (MATE) (TC 2.A.66.1) family. MdtK subfamily.

Its subcellular location is the cell inner membrane. Multidrug efflux pump that functions probably as a Na(+)/drug antiporter. This chain is Multidrug resistance protein MdtK, found in Shigella flexneri serotype 5b (strain 8401).